The primary structure comprises 610 residues: Oxidoreductase ptaE (610 aa).

The signal sequence occupies residues 1–20 (MFQSILFLAFYGRPVFGSAA). 2 Plastocyanin-like domains span residues 67 to 181 (QIIS…HGPS) and 191 to 344 (PWLL…IVRY). 10 N-linked (GlcNAc...) asparagine glycosylation sites follow: Asn-105, Asn-111, Asn-262, Asn-277, Asn-330, Asn-356, Asn-401, Asn-409, Asn-427, and Asn-602. The Plastocyanin-like 3 domain occupies 425–568 (YVNWSEPSVK…IAIQFLEQPS (144 aa)).

The protein belongs to the multicopper oxidase family.

Its pathway is secondary metabolite biosynthesis. In terms of biological role, oxidoreductase; part of the gene cluster that mediates the biosynthesis of pestheic acid, a diphenyl ether which is a biosynthetic precursor of the unique chloropupukeananes. The biosynthesis initiates from condensation of acetate and malonate units catalyzed by the non-reducing PKS ptaA. As the ptaA protein is TE/CLC domain-deficient, hydrolysis and Claisen cyclization of the polyketide could be catalyzed by ptaB containing a beta-lactamase domain. The ptaB protein might hydrolyze the thioester bond between the ACP of ptaA and the intermediate to release atrochrysone carboxylic acid, which is spontaneously dehydrated to form endocrocin anthrone. Endocrocin anthrone is then converted to endocrocin, catalyzed by the anthrone oxygenase ptaC. Spontaneous decarboxylation of endocrocin occurs to generate emodin. An O-methyltransferase (ptaH or ptaI) could methylate emodin to form physcion. PtaJ could then catalyze the oxidative cleavage of physcion, and rotation of the intermediate could then afford desmethylisosulochrin. PtaF, a putative NADH-dependent oxidoreductase, might also participate in the oxidative cleavage step. Desmethylisosulochrin is then transformed by another O-methyltransferase (ptaH or ptaI) to form isosulochrin. Chlorination of isosulochrin by ptaM in the cyclohexadienone B ring then produces chloroisosulochrin. PtaE is responsible for the oxidative coupling reactions of both benzophenones isosulouchrin and chloroisosulochrin to RES-1214-1 and pestheic acid respectively, regardless of chlorination. This is Oxidoreductase ptaE from Pestalotiopsis fici (strain W106-1 / CGMCC3.15140).